The following is a 171-amino-acid chain: Inosine/xanthosine triphosphatase (171 aa).

8-13 (TTNPAK) is a binding site for substrate. The Mg(2+) site is built by aspartate 38 and glutamine 68.

The protein belongs to the YjjX NTPase family. In terms of assembly, homodimer. Mg(2+) is required as a cofactor. It depends on Mn(2+) as a cofactor.

It carries out the reaction XTP + H2O = XDP + phosphate + H(+). The catalysed reaction is ITP + H2O = IDP + phosphate + H(+). Functionally, phosphatase that hydrolyzes non-canonical purine nucleotides such as XTP and ITP to their respective diphosphate derivatives. Probably excludes non-canonical purines from DNA/RNA precursor pool, thus preventing their incorporation into DNA/RNA and avoiding chromosomal lesions. In Cronobacter sakazakii (strain ATCC BAA-894) (Enterobacter sakazakii), this protein is Inosine/xanthosine triphosphatase.